The following is an 872-amino-acid chain: Paramyosin (872 aa).

Positions 1–31 (MSLYRSPSAALLKSPSQAAFGAPFGSMSVAD) are nonhelical region. A coiled-coil region spans residues 32 to 851 (LGSLTRLEDK…ESSLHLIRAK (820 aa)). The interaction with unc-89 stretch occupies residues 294–376 (EITQWKSKFD…ALLERAREQL (83 aa)). The segment at 856 to 866 (VVTGKSSSKIF) is nonhelical region.

It belongs to the paramyosin family. As to quaternary structure, homodimer. May interact with unc-89 (via SH3 domain). Phosphorylated on serine residues in the N-terminal non-helical region. As to expression, expressed in body wall muscles of larvae and adults (at protein level). Expressed in gonadal myoepithelial sheath cells (at protein level).

Its subcellular location is the cytoplasm. The protein resides in the myofibril. It localises to the sarcomere. The protein localises to the a band. Structural component of the muscle thick filaments which is involved in assembly and organization of sarcomere myofilaments. Involved in ovulation. Plays a role in the formation of muscle connections, also called muscle arm extensions, between the body wall and the motor axons in the dorsal and ventral cord. In Caenorhabditis elegans, this protein is Paramyosin (unc-15).